Consider the following 225-residue polypeptide: 2-amino-5-formylamino-6-ribosylaminopyrimidin-4(3H)-one 5'-monophosphate deformylase (225 aa).

Residues glutamate 28, histidine 30, aspartate 39, and histidine 107 each coordinate Fe cation.

Belongs to the creatininase superfamily. FAPy deformylase family. Homodimer. Fe(2+) serves as cofactor. The cofactor is Zn(2+).

The catalysed reaction is 2-amino-5-formylamino-6-(5-phospho-D-ribosylamino)pyrimidin-4(3H)-one + H2O = 2,5-diamino-6-(1-D-ribosylamino)pyrimidin-4(3H)-one 5'-phosphate + formate + H(+). The protein operates within cofactor biosynthesis; coenzyme F420 biosynthesis. Its pathway is cofactor biosynthesis; riboflavin biosynthesis. Its function is as follows. Catalyzes the hydrolysis of the formamide of 2-amino-5-formylamino-6-ribosylamino-4(3H)-pyrimidinone 5'-monophosphate (FAPy) to form 2,5-diamino-6-ribosylamino-4(3H)-pyrimidinone 5'-phosphate (APy). The sequence is that of 2-amino-5-formylamino-6-ribosylaminopyrimidin-4(3H)-one 5'-monophosphate deformylase from Methanocaldococcus fervens (strain DSM 4213 / JCM 15782 / AG86) (Methanococcus fervens).